A 496-amino-acid chain; its full sequence is Aspartic proteinase (496 aa).

The N-terminal stretch at 1–24 (MAKRHLLLVTTCLWALSCALLLHA) is a signal peptide. Residues 25–59 (SSDGFLRVNLNKKRLDKEDLTAAKLAQQGNRLLKT) constitute a propeptide, activation peptide. The region spanning 77 to 493 (YYGVIGLGSP…DFGKDRIGFA (417 aa)) is the Peptidase A1 domain. The active site involves D95. Intrachain disulfides connect C108–C114 and C273–C277. D282 is an active-site residue. A Saposin B-type domain is found at 307–407 (IISTECKEVV…NQLCERLPSP (101 aa)). 4 cysteine pairs are disulfide-bonded: C312-C401, C337-C373, C343-C370, and C415-C452. N-linked (GlcNAc...) asparagine glycosylation occurs at N387.

It belongs to the peptidase A1 family.

Its subcellular location is the vacuole. Involved in the breakdown of propeptides of storage proteins in protein-storage vacuoles. The sequence is that of Aspartic proteinase (RAP) from Oryza sativa subsp. japonica (Rice).